A 614-amino-acid polypeptide reads, in one-letter code: Signal recognition particle receptor subunit alpha homolog (614 aa).

Positions 119 to 244 are disordered; it reads EASAKQVKAP…DRSRDSPDDV (126 aa). A compositionally biased stretch (basic and acidic residues) spans 149-160; the sequence is QDDKKPVEKRVN. Positions 164–178 are enriched in pro residues; that stretch reads APPPSKSQPSSPPTG. The segment covering 232-241 has biased composition (basic and acidic residues); the sequence is ALLDRSRDSP. Phosphoserine is present on residues Ser237 and Ser240. Phosphotyrosine is present on Tyr246. Ser268, Ser278, and Ser279 each carry phosphoserine. Over residues 268–285 the composition is skewed to acidic residues; that stretch reads SEDEADNEDASSEGEAEE. Positions 268-290 are disordered; the sequence is SEDEADNEDASSEGEAEEQVQSK. Positions 396 to 613 are NG domain; it reads YTIIFCGVNG…NVNAVVNSLM (218 aa). GTP-binding positions include 402–409, 497–501, and 565–568; these read GVNGVGKS, DTAGR, and TKFD.

The protein belongs to the GTP-binding SRP family. As to quaternary structure, heterodimer of SrpRalpha and SrpRbeta. In terms of tissue distribution, in 8-9 hours embryos, expression is seen in a segmental pattern along embryonic ventral midline.

Its subcellular location is the endoplasmic reticulum membrane. Functionally, component of the SRP (signal recognition particle) receptor. Ensures, in conjunction with the signal recognition particle, the correct targeting of the nascent secretory proteins to the endoplasmic reticulum membrane system. Forms a guanosine 5'-triphosphate (GTP)-dependent complex with the SRP subunit Srp54. SRP receptor compaction and GTPase rearrangement drive SRP-mediated cotranslational protein translocation into the ER. May have a role in axonogenesis. The sequence is that of Signal recognition particle receptor subunit alpha homolog from Drosophila melanogaster (Fruit fly).